A 250-amino-acid chain; its full sequence is DNA repair protein RecO (250 aa).

Belongs to the RecO family.

Functionally, involved in DNA repair and RecF pathway recombination. This Granulibacter bethesdensis (strain ATCC BAA-1260 / CGDNIH1) protein is DNA repair protein RecO.